The chain runs to 507 residues: Histidine ammonia-lyase (507 aa).

Residues 142–144 (ASG) constitute a cross-link (5-imidazolinone (Ala-Gly)). Serine 143 is modified (2,3-didehydroalanine (Ser)).

It belongs to the PAL/histidase family. Contains an active site 4-methylidene-imidazol-5-one (MIO), which is formed autocatalytically by cyclization and dehydration of residues Ala-Ser-Gly.

The protein localises to the cytoplasm. The catalysed reaction is L-histidine = trans-urocanate + NH4(+). It participates in amino-acid degradation; L-histidine degradation into L-glutamate; N-formimidoyl-L-glutamate from L-histidine: step 1/3. This Maricaulis maris (strain MCS10) (Caulobacter maris) protein is Histidine ammonia-lyase.